Consider the following 479-residue polypeptide: Bifunctional protein HldE (479 aa).

Residues 1-322 form a ribokinase region; the sequence is MLAETQLAPI…AALERTAAQI (322 aa). 198–201 serves as a coordination point for ATP; it reads NRRE. The active site involves aspartate 267. The cytidylyltransferase stretch occupies residues 350–479; the sequence is FTNGCFDLVH…TSSLVAKART (130 aa).

It in the N-terminal section; belongs to the carbohydrate kinase PfkB family. This sequence in the C-terminal section; belongs to the cytidylyltransferase family. Homodimer.

It catalyses the reaction D-glycero-beta-D-manno-heptose 7-phosphate + ATP = D-glycero-beta-D-manno-heptose 1,7-bisphosphate + ADP + H(+). It carries out the reaction D-glycero-beta-D-manno-heptose 1-phosphate + ATP + H(+) = ADP-D-glycero-beta-D-manno-heptose + diphosphate. Its pathway is nucleotide-sugar biosynthesis; ADP-L-glycero-beta-D-manno-heptose biosynthesis; ADP-L-glycero-beta-D-manno-heptose from D-glycero-beta-D-manno-heptose 7-phosphate: step 1/4. It participates in nucleotide-sugar biosynthesis; ADP-L-glycero-beta-D-manno-heptose biosynthesis; ADP-L-glycero-beta-D-manno-heptose from D-glycero-beta-D-manno-heptose 7-phosphate: step 3/4. Functionally, catalyzes the phosphorylation of D-glycero-D-manno-heptose 7-phosphate at the C-1 position to selectively form D-glycero-beta-D-manno-heptose-1,7-bisphosphate. In terms of biological role, catalyzes the ADP transfer from ATP to D-glycero-beta-D-manno-heptose 1-phosphate, yielding ADP-D-glycero-beta-D-manno-heptose. This chain is Bifunctional protein HldE, found in Azorhizobium caulinodans (strain ATCC 43989 / DSM 5975 / JCM 20966 / LMG 6465 / NBRC 14845 / NCIMB 13405 / ORS 571).